Here is a 1128-residue protein sequence, read N- to C-terminus: Adipocyte enhancer-binding protein 1 (1128 aa).

A signal peptide spans 1 to 25 (MAAVRTASLLCGLLALLALCPEGSP). Residues 40–368 (GFLSEFETQS…PRKGEELEEE (329 aa)) form a disordered region. A compositionally biased stretch (basic and acidic residues) spans 77–109 (PRADAEAPPEKNKDKEKKGKKDKGPKAAKHLEG). Over residues 113-163 (PTKKPKEKPPKATKKPKEKPPKATKKPKEKPPKATKKPKEKPPKATKRPSA) the composition is skewed to basic residues. Composition is skewed to polar residues over residues 178–187 (RSLTSPSNPG) and 198–209 (TSLNTWQGQGEE). Basic residues predominate over residues 249–261 (RQKQPRPTPSRKR). 2 stretches are compositionally biased toward basic and acidic residues: residues 267 to 282 (PEEKTQEPEERKEVDP) and 327 to 363 (EELKKPKKEGSSPKEDTEDKWAAEKNKDHKAGPRKGE). One can recognise an F5/8 type C domain in the interval 375-532 (IKCPPIGMES…LCMRLEVLGC (158 aa)). The tract at residues 382-547 (MESHRIEDNQ…YSYYAQNEVV (166 aa)) is required for DNA-binding and interaction with NFKBIA. 2 interaction with MAPK1 and MAPK3 regions span residues 413-616 (AGAN…TAGM) and 998-1128 (DPSR…FGDF). Residue Asn520 is glycosylated (N-linked (GlcNAc...) asparagine). Residues 547-977 (VTTDSLDFRH…TQCNFILARS (431 aa)) form an interaction with PTEN region. The region spanning 555–896 (RHHSYKDMRQ…EALLTFMEQV (342 aa)) is the Peptidase M14 domain. A required for transcriptional repression region spans residues 933 to 1128 (DYWRILNPGE…ETYTVNFGDF (196 aa)). Positions 1027–1056 (LRRLNSTTGPATSPTPALTLPPSPTPGSTS) are disordered. The segment covering 1030–1044 (LNSTTGPATSPTPAL) has biased composition (low complexity).

This sequence belongs to the peptidase M14 family. As to quaternary structure, interacts with different types of collagen, including collagens I, III, and V. Interacts with GNG5, NFKBIA, MAPK1, MAPK3 and PTEN. May interact with calmodulin. Interaction with MAPK1 may stimulate DNA-binding. Binds to DNA in vitro. In terms of processing, phosphorylated by MAPK1 in vitro. As to expression, expressed in aorta.

It is found in the secreted. Its function is as follows. As a positive regulator of collagen fibrillogenesis, it is probably involved in the organization and remodeling of the extracellular matrix. May positively regulate MAP-kinase activity in adipocytes, leading to enhanced adipocyte proliferation and reduced adipocyte differentiation. May also positively regulate NF-kappa-B activity in macrophages by promoting the phosphorylation and subsequent degradation of I-kappa-B-alpha (NFKBIA), leading to enhanced macrophage inflammatory responsiveness. Can act as a transcriptional repressor. This Rattus norvegicus (Rat) protein is Adipocyte enhancer-binding protein 1 (Aebp1).